Consider the following 103-residue polypeptide: Large ribosomal subunit protein bL21 (103 aa).

This sequence belongs to the bacterial ribosomal protein bL21 family. Part of the 50S ribosomal subunit. Contacts protein L20.

Functionally, this protein binds to 23S rRNA in the presence of protein L20. In Pectobacterium carotovorum subsp. carotovorum (strain PC1), this protein is Large ribosomal subunit protein bL21.